The chain runs to 89 residues: Small ribosomal subunit protein uS15 (89 aa).

It belongs to the universal ribosomal protein uS15 family. In terms of assembly, part of the 30S ribosomal subunit. Forms a bridge to the 50S subunit in the 70S ribosome, contacting the 23S rRNA.

One of the primary rRNA binding proteins, it binds directly to 16S rRNA where it helps nucleate assembly of the platform of the 30S subunit by binding and bridging several RNA helices of the 16S rRNA. Functionally, forms an intersubunit bridge (bridge B4) with the 23S rRNA of the 50S subunit in the ribosome. The chain is Small ribosomal subunit protein uS15 from Lactiplantibacillus plantarum (strain ATCC BAA-793 / NCIMB 8826 / WCFS1) (Lactobacillus plantarum).